Here is a 94-residue protein sequence, read N- to C-terminus: DNA-directed RNA polymerase subunit Rpo11 (94 aa).

Belongs to the archaeal Rpo11/eukaryotic RPB11/RPC19 RNA polymerase subunit family. Part of the RNA polymerase complex.

Its subcellular location is the cytoplasm. It carries out the reaction RNA(n) + a ribonucleoside 5'-triphosphate = RNA(n+1) + diphosphate. In terms of biological role, DNA-dependent RNA polymerase (RNAP) catalyzes the transcription of DNA into RNA using the four ribonucleoside triphosphates as substrates. The polypeptide is DNA-directed RNA polymerase subunit Rpo11 (Thermococcus kodakarensis (strain ATCC BAA-918 / JCM 12380 / KOD1) (Pyrococcus kodakaraensis (strain KOD1))).